Consider the following 429-residue polypeptide: Enolase (429 aa).

Position 167 (glutamine 167) interacts with (2R)-2-phosphoglycerate. Glutamate 209 (proton donor) is an active-site residue. Mg(2+) contacts are provided by aspartate 246, glutamate 289, and aspartate 316. Residues lysine 341, arginine 370, serine 371, and lysine 392 each contribute to the (2R)-2-phosphoglycerate site. The active-site Proton acceptor is lysine 341.

It belongs to the enolase family. Component of the RNA degradosome, a multiprotein complex involved in RNA processing and mRNA degradation. Mg(2+) is required as a cofactor.

It is found in the cytoplasm. The protein resides in the secreted. The protein localises to the cell surface. The enzyme catalyses (2R)-2-phosphoglycerate = phosphoenolpyruvate + H2O. It participates in carbohydrate degradation; glycolysis; pyruvate from D-glyceraldehyde 3-phosphate: step 4/5. In terms of biological role, catalyzes the reversible conversion of 2-phosphoglycerate (2-PG) into phosphoenolpyruvate (PEP). It is essential for the degradation of carbohydrates via glycolysis. The protein is Enolase of Pseudomonas putida (strain ATCC 47054 / DSM 6125 / CFBP 8728 / NCIMB 11950 / KT2440).